The chain runs to 603 residues: Arginine--tRNA ligase (603 aa).

Residues 143–153 (PNIAKEMHVGH) carry the 'HIGH' region motif.

It belongs to the class-I aminoacyl-tRNA synthetase family. As to quaternary structure, monomer.

The protein resides in the cytoplasm. It catalyses the reaction tRNA(Arg) + L-arginine + ATP = L-arginyl-tRNA(Arg) + AMP + diphosphate. The polypeptide is Arginine--tRNA ligase (Prochlorococcus marinus (strain MIT 9303)).